A 222-amino-acid chain; its full sequence is Germin-like protein subfamily 1 member 16 (222 aa).

The first 22 residues, methionine 1–alanine 22, serve as a signal peptide directing secretion. The cysteines at positions 32 and 48 are disulfide-linked. One can recognise a Cupin type-1 domain in the interval serine 62–lysine 213. A glycan (N-linked (GlcNAc...) asparagine) is linked at asparagine 77. Residues histidine 110, histidine 112, glutamate 117, and histidine 159 each contribute to the Mn(2+) site.

It belongs to the germin family. As to quaternary structure, oligomer (believed to be a pentamer but probably hexamer).

Its subcellular location is the secreted. It is found in the extracellular space. It localises to the apoplast. Its function is as follows. May play a role in plant defense. Probably has no oxalate oxidase activity even if the active site is conserved. The polypeptide is Germin-like protein subfamily 1 member 16 (Arabidopsis thaliana (Mouse-ear cress)).